The primary structure comprises 407 residues: Schlafen-like protein 1 (407 aa).

Disordered stretches follow at residues 1–28 (MTPMKRSVQTQVSEPFMESWGEESLPEL) and 137–191 (AQGP…CQGR). The segment covering 155–167 (GLSPGPSPGSGVP) has biased composition (low complexity). Residues 181-190 (QAQQLQSCQG) show a composition bias toward polar residues. Position 261–268 (261–268 (GVEDSGLV)) interacts with ATP. Residues 366 to 398 (RQRWLVELGKLEEKMKALMMEKEQLQQQLQQHG) adopt a coiled-coil conformation.

It belongs to the Schlafen family. Subgroup I subfamily.

The chain is Schlafen-like protein 1 (SLFNL1) from Homo sapiens (Human).